A 563-amino-acid polypeptide reads, in one-letter code: (R)-mandelonitrile lyase 2 (563 aa).

The first 27 residues, 1-27 (MEKSTMSAILLVLYIFVLHLQYSEVHS), serve as a signal peptide directing secretion. FAD-binding positions include 63 to 64 (TS), 82 to 83 (ER), Val129, Thr133, and 137 to 140 (NAGV). N-linked (GlcNAc...) asparagine glycosylation is found at Asn145 and Asn162. Val244 lines the FAD pocket. Residue Cys355 participates in substrate binding. 2 N-linked (GlcNAc...) asparagine glycosylation sites follow: Asn379 and Asn419. A disulfide bridge connects residues Cys426 and Cys477. Tyr484 lines the substrate pocket. Residues 485-486 (WH) and Gly514 each bind FAD. His486 (proton donor) is an active-site residue. The active-site Proton acceptor is His524. 525–526 (PQ) provides a ligand contact to FAD.

It belongs to the GMC oxidoreductase family. As to quaternary structure, monomer. FAD is required as a cofactor. Glycosylated. Deglycosylation does not affect the enzymatic activity.

The catalysed reaction is (R)-mandelonitrile = benzaldehyde + hydrogen cyanide. Involved in cyanogenesis, the release of HCN from injured tissues. Catalyzes the stereospecific addition of HCN to a variety of aldehydes in vitro. Has no oxidase activity. The redox properties of the FAD cofactor appear to be unimportant for catalysis. The protein is (R)-mandelonitrile lyase 2 (MDL2) of Prunus dulcis (Almond).